The sequence spans 453 residues: Protein LIAT1 (453 aa).

Residues 1-152 form a disordered region; the sequence is METRGPGLAV…HLPSDSSTVS (152 aa). Residues 82–103 form a lysine-rich domain region; the sequence is KRKVKKKKRKKKTKGSGKGDDK. Residues 83-96 are compositionally biased toward basic residues; the sequence is RKVKKKKRKKKTKG. Residues 106–117 show a composition bias toward low complexity; sequence SQSLKSQPLSSS. The span at 125–145 shows a compositional bias: basic and acidic residues; it reads CKERGPKPEHRQSKVEKKHLP. Positions 145 to 197 are interaction with ATE1; that stretch reads PSDSSTVSLPDFAEIENLANRINESLRWDGILADPEAEKERIRIYKLNRRKRY. A run of 20 repeats spans residues 201 to 210, 211 to 220, 221 to 230, 231 to 240, 241 to 250, 251 to 260, 261 to 270, 271 to 280, 281 to 290, 291 to 300, 301 to 310, 311 to 320, 321 to 330, 331 to 340, 341 to 350, 351 to 360, 361 to 370, 371 to 380, 381 to 390, and 391 to 400. Residues 201 to 400 are 20 X 10 AA approximate tandem repeat of A-L-K-G-F-H-P-D-P-E; sequence ALKGFHPDPE…ALKGFHTDPN (200 aa). Disordered regions lie at residues 225–306 and 320–432; these read FHPD…KGFH and EALK…CPNL. The span at 320 to 396 shows a compositional bias: basic and acidic residues; that stretch reads EALKGFHPDP…PDPEALKGFH (77 aa).

In terms of assembly, self-associates (via Lys-rich domain); targets LIAT1 to the nucleolus. Interacts with ATE1; it is not a substrate of ATE1, the interaction takes place in the cytoplasm and seems to increase ATE1 arginyltransferase activity. Interacts with JMJD6 and MRPS14. In terms of processing, post-translationally modified by JMJD6 lysyl-hydroxylase activity at its Lys-rich domain, which inhibits its self-association and nucleolar localization.

Its subcellular location is the nucleus. The protein resides in the nucleolus. The protein localises to the cytoplasm. Its function is as follows. Participates in nucleolar liquid-liquid phase separation (LLPS) through its N-terminal intrinsically disordered region (IDR). May be involved in ATE1-mediated N-terminal arginylation. This is Protein LIAT1 from Homo sapiens (Human).